Reading from the N-terminus, the 107-residue chain is Probable monothiol glutaredoxin 2 (107 aa).

The 101-residue stretch at 7-107 (LEFIQNAIKK…LEKMLKDVVV (101 aa)) folds into the Glutaredoxin domain. K24 contacts glutathione. Residue C32 coordinates [2Fe-2S] cluster. Glutathione-binding positions include R61, F73, and 86-87 (CD).

The protein belongs to the glutaredoxin family. Monothiol subfamily.

This Rickettsia prowazekii (strain Madrid E) protein is Probable monothiol glutaredoxin 2 (grxC2).